The following is a 1105-amino-acid chain: Lysylphosphatidylglycerol biosynthesis bifunctional protein LysX (1105 aa).

A phosphatidylglycerol lysyltransferase region spans residues 1–603 (MTVTKPRSVQ…LLHHDGSAPD (603 aa)). A run of 7 helical transmembrane segments spans residues 20 to 40 (VPAAAGWAVGVIATLSLLASI), 62 to 82 (FPDTSFAWSFVLALLAAALAA), 86 to 106 (IAWLLLLTNVVLAAFLNAADI), 117 to 137 (FGENLGFAVHVVAIVVLVLGY), 154 to 174 (AVLVAGGAIGILVSWGLVELF), 186 to 203 (YVANRVIGFALADPDLFT), and 208 to 228 (VFLNAMFGLFGALALIAATIV). The interval 604–1105 (VSGLRQSAIA…TLPFPLAKPH (502 aa)) is lysine--tRNA ligase. Mg(2+) is bound by residues D1017 and E1024.

It in the N-terminal section; belongs to the LPG synthetase family. In the C-terminal section; belongs to the class-II aminoacyl-tRNA synthetase family. Mg(2+) serves as cofactor.

Its subcellular location is the cell membrane. It carries out the reaction tRNA(Lys) + L-lysine + ATP = L-lysyl-tRNA(Lys) + AMP + diphosphate. The enzyme catalyses L-lysyl-tRNA(Lys) + a 1,2-diacyl-sn-glycero-3-phospho-(1'-sn-glycerol) = a 1,2-diacyl-sn-glycero-3-phospho-1'-(3'-O-L-lysyl)-sn-glycerol + tRNA(Lys). Functionally, catalyzes the production of L-lysyl-tRNA(Lys)transfer and the transfer of a lysyl group from L-lysyl-tRNA(Lys) to membrane-bound phosphatidylglycerol (PG), which produces lysylphosphatidylglycerol (LPG), one of the components of the bacterial membrane with a positive net charge. LPG synthesis contributes to the resistance to cationic antimicrobial peptides (CAMPs) and likely protects M.tuberculosis against the CAMPs produced by competiting microorganisms (bacteriocins). In fact, the modification of anionic phosphatidylglycerol with positively charged L-lysine results in repulsion of the peptides. The protein is Lysylphosphatidylglycerol biosynthesis bifunctional protein LysX (lysX) of Mycobacterium marinum (strain ATCC BAA-535 / M).